Consider the following 499-residue polypeptide: Nuclear receptor-binding protein 2 (499 aa).

Positions 1–31 (MAAPEPAPRRGREREREDESEDESDILEESP) are disordered. Positions 7-17 (APRRGRERERE) are enriched in basic and acidic residues. A compositionally biased stretch (acidic residues) spans 18-28 (DESEDESDILE). Residues 36–304 (QKRREQVNQG…AHNLLFHRVL (269 aa)) form the Protein kinase domain. Positions 396-416 (APPPEEAQKAKTPTPEPFDSE) are disordered. Residues Thr407 and Thr409 each carry the phosphothreonine modification.

This sequence belongs to the protein kinase superfamily. Ser/Thr protein kinase family. As to expression, expressed in Purkinje cells of the cerebellum and neurons in the CA3 region of the hippocampus. Also detected in non-neural tissues including mesenchymal layer adjacent to epithelium in developing bronchi of the lung, the epithelium of the stomach as well as cells in the liver.

It localises to the cytoplasm. Functionally, may regulate apoptosis of neural progenitor cells during their differentiation. The chain is Nuclear receptor-binding protein 2 from Mus musculus (Mouse).